A 241-amino-acid polypeptide reads, in one-letter code: Octanoyltransferase (241 aa).

The region spanning 38–227 (AGGPDTLLLL…AVCNALDGAL (190 aa)) is the BPL/LPL catalytic domain. Substrate is bound by residues 85–92 (RGGKITWH), 157–159 (AIG), and 170–172 (GFA). Catalysis depends on Cys-188, which acts as the Acyl-thioester intermediate.

The protein belongs to the LipB family.

The protein localises to the cytoplasm. The enzyme catalyses octanoyl-[ACP] + L-lysyl-[protein] = N(6)-octanoyl-L-lysyl-[protein] + holo-[ACP] + H(+). It participates in protein modification; protein lipoylation via endogenous pathway; protein N(6)-(lipoyl)lysine from octanoyl-[acyl-carrier-protein]: step 1/2. In terms of biological role, catalyzes the transfer of endogenously produced octanoic acid from octanoyl-acyl-carrier-protein onto the lipoyl domains of lipoate-dependent enzymes. Lipoyl-ACP can also act as a substrate although octanoyl-ACP is likely to be the physiological substrate. The polypeptide is Octanoyltransferase (Mycobacterium marinum (strain ATCC BAA-535 / M)).